Reading from the N-terminus, the 92-residue chain is Envelope glycoprotein J (92 aa).

Residues 1–21 (MSLRAVWHLGLLGSLVGAVLA) form the signal peptide. Topologically, residues 22–49 (ATHRGPAANTTDPLTHAPVSPHPSPLGG) are extracellular. A glycan (N-linked (GlcNAc...) asparagine; by host) is linked at N30. The helical transmembrane segment at 50–70 (FAVPLVVGGLCAVVLGAACLL) threads the bilayer. Residues 71-92 (ELLRRTCRGWGRYHPYMDPVVV) are Cytoplasmic-facing.

The protein belongs to the alphaherpesvirinae glycoprotein J family.

The protein localises to the host Golgi apparatus membrane. It localises to the host endoplasmic reticulum membrane. The protein resides in the host endosome membrane. Functionally, inhibits host cell apoptosis. Induces an increase in reactive oxygen species (ROS) in the host cell. The chain is Envelope glycoprotein J (gJ) from Homo sapiens (Human).